The primary structure comprises 516 residues: Endoglucanase 17 (516 aa).

Positions 1–29 (MALLLVSSSSSYALRVTIFLSFFFFLCNG) are cleaved as a signal peptide. The Nucleophile role is filled by Asp-105. Residues His-433, Asp-484, and Glu-493 contribute to the active site.

Belongs to the glycosyl hydrolase 9 (cellulase E) family.

The protein localises to the secreted. It carries out the reaction Endohydrolysis of (1-&gt;4)-beta-D-glucosidic linkages in cellulose, lichenin and cereal beta-D-glucans.. The polypeptide is Endoglucanase 17 (Arabidopsis thaliana (Mouse-ear cress)).